Consider the following 200-residue polypeptide: Shikimate kinase (200 aa).

Residue 33 to 38 (GAGKST) coordinates ATP. Residue S37 coordinates Mg(2+). Residues D55, R79, and G101 each coordinate substrate. Position 139 (R139) interacts with ATP. R158 is a binding site for substrate.

The protein belongs to the shikimate kinase family. In terms of assembly, monomer. The cofactor is Mg(2+).

It localises to the cytoplasm. It catalyses the reaction shikimate + ATP = 3-phosphoshikimate + ADP + H(+). It participates in metabolic intermediate biosynthesis; chorismate biosynthesis; chorismate from D-erythrose 4-phosphate and phosphoenolpyruvate: step 5/7. Catalyzes the specific phosphorylation of the 3-hydroxyl group of shikimic acid using ATP as a cosubstrate. The protein is Shikimate kinase of Brucella abortus (strain S19).